The primary structure comprises 393 residues: Cytotoxic and regulatory T-cell molecule (393 aa).

The signal sequence occupies residues 1–17 (MWWRVLSLLAWFPLQEA). The Ig-like V-type domain maps to 18 to 114 (SLTNHTETIT…VSTKEVKVIV (97 aa)). Over 18-287 (SLTNHTETIT…YLGLARKKSG (270 aa)) the chain is Extracellular. 3 N-linked (GlcNAc...) asparagine glycosylation sites follow: Asn-21, Asn-87, and Asn-178. 2 cysteine pairs are disulfide-bonded: Cys-38–Cys-98 and Cys-141–Cys-196. The Ig-like C2-type domain maps to 118–210 (PFKPILEASV…RGLQGRKLVA (93 aa)). The disordered stretch occupies residues 225 to 273 (SDALERNSLSSQDPQQPTSTVSVTEDSSTSEIDKEEKEQTTQDPDLTTE). Over residues 231-241 (NSLSSQDPQQP) the composition is skewed to polar residues. Low complexity predominate over residues 242–254 (TSTVSVTEDSSTS). Positions 255–264 (EIDKEEKEQT) are enriched in basic and acidic residues. A helical membrane pass occupies residues 288–308 (ILLLTLVSFLIFILFIIVQLF). The Cytoplasmic segment spans residues 309–393 (IMKLRKAHVI…KHIQVPESIV (85 aa)). Basic and acidic residues-rich tracts occupy residues 328–348 (HTLESYRSRSNNEETSSEEKN) and 374–387 (ENVQHSKLEEKHIQ). 2 disordered regions span residues 328 to 354 (HTLESYRSRSNNEETSSEEKNGQSSHP) and 374 to 393 (ENVQHSKLEEKHIQVPESIV). The PDZ-binding motif lies at 390 to 393 (ESIV).

Belongs to the nectin family. As to quaternary structure, monomer. May form homodimer (via Ig-like V-type domain). Interacts (via Ig-like V-type domain) with CADM1 (via Ig-like V-type domain); the interaction competes with CRTAM homodimerization and CADM1 homodimerization. Interacts (via PDZ-binding motif) with SCRIB (via PDZ domain 3); the interaction promotes CRTAM and SCRIB polarization in a subset of CD4+ T-cells. In terms of tissue distribution, in the immune system, expression is restricted to activated class-I MHC-restricted cells, including NKT and CD8 T-cells. Strongly expressed in spleen, thymus, small intestine, peripheral blood leukocyte, and in Purkinje neurons in cerebellum. Expressed at much lower levels in testis, ovary, colon, lung and lymphoid tissues.

The protein resides in the cell membrane. Its function is as follows. Mediates heterophilic cell-cell adhesion which regulates the activation, differentiation and tissue retention of various T-cell subsets. Interaction with CADM1 promotes natural killer (NK) cell cytotoxicity and IFNG/interferon-gamma secretion by CD8+ T-cells in vitro as well as NK cell-mediated rejection of tumors expressing CADM1 in vivo. Regulates CD8+ T-cell proliferation in response to T-cell receptor (TCR) activation. Appears to be dispensable for CD8+ T-cell-mediated cytotoxicity. Interaction with SCRIB promotes the late phase of cellular polarization of a subset of CD4+ T-cells, which in turn regulates TCR-mediated proliferation and IFNG, IL17 and IL22 production. By interacting with CADM1 on CD8+ dendritic cells, regulates the retention of activated CD8+ T-cells within the draining lymph node. Required for the intestinal retention of intraepithelial CD4+ CD8+ T-cells and, to a lesser extent, intraepithelial and lamina propria CD8+ T-cells and CD4+ T-cells. Interaction with CADM1 promotes the adhesion to gut-associated CD103+ dendritic cells, which may facilitate the expression of gut-homing and adhesion molecules on T-cells and the conversion of CD4+ T-cells into CD4+ CD8+ T-cells. The sequence is that of Cytotoxic and regulatory T-cell molecule from Homo sapiens (Human).